The primary structure comprises 548 residues: Tau-cadinol synthase (548 aa).

Residues Asp-303 and Asp-307 each contribute to the Mg(2+) site. Substrate is bound by residues Asp-303, Asp-307, and Arg-443. The DDXXD motif signature appears at 303-307 (DDTYD).

Belongs to the terpene synthase family. Monomer. The cofactor is Mg(2+). Requires Mn(2+) as cofactor. As to expression, constitutively expressed in aerial tissues, but barely observed in roots.

It localises to the cytoplasm. It carries out the reaction (2E,6E)-farnesyl diphosphate + H2O = tau-cadinol + diphosphate. It functions in the pathway secondary metabolite biosynthesis; terpenoid biosynthesis. Its function is as follows. Sesquiterpene synthase that catalyzes the formation of a blend of sesquiterpenes and sesquiterpenoid alcohols. Converts farnesyl diphosphate to tau-cadinol. The sequence is that of Tau-cadinol synthase from Zea mays (Maize).